The following is a 142-amino-acid chain: Alpha-lactalbumin (142 aa).

An N-terminal signal peptide occupies residues 1 to 19; the sequence is MMSFVSLLLVGILFHATQA. Residues 20-142 enclose the C-type lysozyme domain; that stretch reads EQLTKCEVFR…KLDQWLCEKL (123 aa). 4 cysteine pairs are disulfide-bonded: cysteine 25–cysteine 139, cysteine 47–cysteine 130, cysteine 80–cysteine 96, and cysteine 92–cysteine 110. Asparagine 64 carries N-linked (GlcNAc...) asparagine glycosylation. Ca(2+) contacts are provided by lysine 98, aspartate 101, aspartate 103, aspartate 106, and aspartate 107.

This sequence belongs to the glycosyl hydrolase 22 family. Lactose synthase (LS) is a heterodimer of a catalytic component, beta1,4-galactosyltransferase (beta4Gal-T1) and a regulatory component, alpha-lactalbumin (LA). Mammary gland specific. Secreted in milk.

It localises to the secreted. Regulatory subunit of lactose synthase, changes the substrate specificity of galactosyltransferase in the mammary gland making glucose a good acceptor substrate for this enzyme. This enables LS to synthesize lactose, the major carbohydrate component of milk. In other tissues, galactosyltransferase transfers galactose onto the N-acetylglucosamine of the oligosaccharide chains in glycoproteins. The chain is Alpha-lactalbumin (LALBA) from Bos taurus (Bovine).